We begin with the raw amino-acid sequence, 263 residues long: HTH-type transcriptional repressor NanR (263 aa).

Residues 1–25 (MDVMNAFDSQAEDSPTSLGRSLRRR) are disordered. In terms of domain architecture, HTH gntR-type spans 30 to 98 (KKLSEMVEEE…NGERARVSRP (69 aa)). Positions 58 to 77 (ERELMAFFNVGRPSVREALA) form a DNA-binding region, H-T-H motif.

It belongs to the NanR family.

In terms of biological role, transcriptional repressor that controls expression of the genes required for the catabolism of sialic acids. The protein is HTH-type transcriptional repressor NanR of Salmonella choleraesuis (strain SC-B67).